We begin with the raw amino-acid sequence, 1001 residues long: Serine/threonine-protein kinase TAO1 (1001 aa).

The residue at position 9 (Ser-9) is a Phosphoserine. The 254-residue stretch at 28–281 (FTDLREIGHG…SEELLKHMFV (254 aa)) folds into the Protein kinase domain. ATP contacts are provided by residues 34-42 (IGHGSFGAV) and Lys-57. Catalysis depends on Asp-151, which acts as the Proton acceptor. 2 disordered regions span residues 324–380 (PAVE…DKSE) and 404–431 (ENYQ…HKSH). Residues 350 to 370 (SNQSIPSMSISASSQSSSVNS) are compositionally biased toward low complexity. Phosphoserine occurs at positions 421 and 445. Residues 458–651 (SELREQMSGY…QTQKDLEHAM (194 aa)) are a coiled coil. Positions 567–587 (KEELNENQSTPKKEKQEWLSK) are disordered. The span at 577–587 (PKKEKQEWLSK) shows a compositional bias: basic and acidic residues. Residue Thr-669 is modified to Phosphothreonine. Residues 754 to 877 (KAVLKRLKEE…LERQAREIEA (124 aa)) adopt a coiled-coil conformation. The segment at 905 to 1001 (PGASSWSHNP…ISNGSHMSYT (97 aa)) is disordered. A compositionally biased stretch (polar residues) spans 906-915 (GASSWSHNPT). Ser-965 carries the phosphoserine modification. Over residues 975–1001 (GGRTEQGMSRSTSVTSQISNGSHMSYT) the composition is skewed to polar residues.

This sequence belongs to the protein kinase superfamily. STE Ser/Thr protein kinase family. STE20 subfamily. Self-associates. Interacts with MAP2K3. Interacts with SPRED1. Interacts with TESK1; the interaction inhibits TAOK1 kinase activity. Interacts with MAP3K7. Post-translationally, proteolytically processed by caspase-3 (CASP3). Autophosphorylated. Phosphorylated by ATM in response to DNA damage. Phosphorylated by LRRK2.

Its subcellular location is the cytoplasm. The enzyme catalyses L-seryl-[protein] + ATP = O-phospho-L-seryl-[protein] + ADP + H(+). The catalysed reaction is L-threonyl-[protein] + ATP = O-phospho-L-threonyl-[protein] + ADP + H(+). Serine/threonine-protein kinase activity is inhibited by SPRED1. Functionally, serine/threonine-protein kinase involved in various processes such as p38/MAPK14 stress-activated MAPK cascade, DNA damage response and regulation of cytoskeleton stability. Phosphorylates MAP2K3, MAP2K6 and MARK2. Acts as an activator of the p38/MAPK14 stress-activated MAPK cascade by mediating phosphorylation and subsequent activation of the upstream MAP2K3 and MAP2K6 kinases. Involved in G-protein coupled receptor signaling to p38/MAPK14. In response to DNA damage, involved in the G2/M transition DNA damage checkpoint by activating the p38/MAPK14 stress-activated MAPK cascade, probably by mediating phosphorylation of MAP2K3 and MAP2K6. Acts as a regulator of cytoskeleton stability by phosphorylating 'Thr-208' of MARK2, leading to activate MARK2 kinase activity and subsequent phosphorylation and detachment of MAPT/TAU from microtubules. Also acts as a regulator of apoptosis: regulates apoptotic morphological changes, including cell contraction, membrane blebbing and apoptotic bodies formation via activation of the MAPK8/JNK cascade. During fetal development, it plays an essential role in the regulation of neuronal differentiation and migration to the cortical plate. This chain is Serine/threonine-protein kinase TAO1 (Taok1), found in Rattus norvegicus (Rat).